We begin with the raw amino-acid sequence, 343 residues long: Heme A synthase (343 aa).

Helical transmembrane passes span 13 to 33 (VAIW…VGGA), 96 to 116 (HRLL…VFLI), 130 to 150 (AMLG…SSGL), 161 to 181 (LMTH…TALD), 197 to 217 (GWAL…ALVA), 258 to 278 (FNHR…VVLA), 294 to 314 (AVAA…MAAV), and 318 to 338 (LGVL…AFAW). His260 is a heme binding site. His322 serves as a coordination point for heme.

The protein belongs to the COX15/CtaA family. Type 2 subfamily. As to quaternary structure, interacts with CtaB. Heme b serves as cofactor.

The protein resides in the cell membrane. It catalyses the reaction Fe(II)-heme o + 2 A + H2O = Fe(II)-heme a + 2 AH2. It participates in porphyrin-containing compound metabolism; heme A biosynthesis; heme A from heme O: step 1/1. Functionally, catalyzes the conversion of heme O to heme A by two successive hydroxylations of the methyl group at C8. The first hydroxylation forms heme I, the second hydroxylation results in an unstable dihydroxymethyl group, which spontaneously dehydrates, resulting in the formyl group of heme A. The sequence is that of Heme A synthase from Caulobacter vibrioides (strain ATCC 19089 / CIP 103742 / CB 15) (Caulobacter crescentus).